The chain runs to 133 residues: Small ribosomal subunit protein uS12c (133 aa).

This sequence belongs to the universal ribosomal protein uS12 family. As to quaternary structure, part of the 30S ribosomal subunit.

Its subcellular location is the plastid. It localises to the chloroplast. With S4 and S5 plays an important role in translational accuracy. Located at the interface of the 30S and 50S subunits. The polypeptide is Small ribosomal subunit protein uS12c (rps12) (Chlamydomonas reinhardtii (Chlamydomonas smithii)).